A 165-amino-acid chain; its full sequence is Sec-independent protein translocase protein TatB (165 aa).

A helical membrane pass occupies residues 1-21 (MFDVSFTELIVIGVVALIVLG). Over residues 67-84 (DSTAQDVNQSLRSATDSL) the composition is skewed to polar residues. Residues 67 to 165 (DSTAQDVNQS…PKSPSTGNAT (99 aa)) form a disordered region. Over residues 127 to 159 (KLPGTPATLPATAAAEPTPAAPAASQAEAPKSP) the composition is skewed to low complexity.

The protein belongs to the TatB family. In terms of assembly, the Tat system comprises two distinct complexes: a TatABC complex, containing multiple copies of TatA, TatB and TatC subunits, and a separate TatA complex, containing only TatA subunits. Substrates initially bind to the TatABC complex, which probably triggers association of the separate TatA complex to form the active translocon.

It localises to the cell inner membrane. Its function is as follows. Part of the twin-arginine translocation (Tat) system that transports large folded proteins containing a characteristic twin-arginine motif in their signal peptide across membranes. Together with TatC, TatB is part of a receptor directly interacting with Tat signal peptides. TatB may form an oligomeric binding site that transiently accommodates folded Tat precursor proteins before their translocation. In Bordetella avium (strain 197N), this protein is Sec-independent protein translocase protein TatB.